The primary structure comprises 477 residues: AAA-ATPase At3g28600 (477 aa).

A signal peptide spans 1–26; it reads MMMGNTFGSSLASLFFLWATIQQIFP. 245–252 contacts ATP; that stretch reads GPPGTGKS.

It belongs to the AAA ATPase family. BCS1 subfamily. Mg(2+) is required as a cofactor.

The catalysed reaction is ATP + H2O = ADP + phosphate + H(+). This chain is AAA-ATPase At3g28600, found in Arabidopsis thaliana (Mouse-ear cress).